The primary structure comprises 221 residues: Mitochondrial cardiolipin hydrolase (221 aa).

The Mitochondrial intermembrane segment spans residues 1–4 (MGRS). The tract at residues 1 to 38 (MGRSSWRLVFAAGAGLALALEALPWLMRWLLAGRRPRR) is required for mitochondrial localization. A helical membrane pass occupies residues 5-27 (SWRLVFAAGAGLALALEALPWLM). Residues 28–221 (RWLLAGRRPR…SFFPQKHRGH (194 aa)) are Cytoplasmic-facing. The C3H1-type; atypical zinc-finger motif lies at 44–75 (PSQVTCTEALLQAPGLPPGPSGCPCSLPHSES). One can recognise a PLD phosphodiesterase domain in the interval 148–175 (DLGYMHHKFAIVDKKVLITGSLNWTTQA). Active-site residues include H153, K155, and D160.

The protein belongs to the phospholipase D family. MitoPLD/Zucchini subfamily. As to quaternary structure, homodimer. Interacts with MOV10L1. Interacts with MIGA1 and MIGA2; possibly facilitating homodimer formation. Interacts with GK2. In terms of tissue distribution, predominantly expressed in testis (at protein level) and in growing ovary. Also expressed in the brain, eye and urinary bladder (at protein level), but its levels were low or undetectable in other organs.

The protein localises to the mitochondrion outer membrane. It localises to the nucleus membrane. It is found in the cell membrane. The protein resides in the golgi apparatus. The enzyme catalyses a cardiolipin + H2O = a 1,2-diacyl-sn-glycero-3-phospho-(1'-sn-glycerol) + a 1,2-diacyl-sn-glycero-3-phosphate + H(+). With respect to regulation, single stranded DNA (ssDNA) hydrolase activity does not depend upon, but is stimulated by the presence of Ca(2+) and Mn(2+). MIGA1 and MIGA2 increase PLD6 self-association affinity and affects the homodimer conformation facilitating its phospholipase activity over the nuclease activity. MYC induces its expression and stimulates its phospholipase activity. Functionally, presents phospholipase and nuclease activities, depending on the different physiological conditions. Interaction with Mitoguardin (MIGA1 or MIGA2) affects the dimer conformation, facilitating the lipase activity over the nuclease activity. Plays a key role in mitochondrial fusion and fission via its phospholipase activity. In its phospholipase role, it uses the mitochondrial lipid cardiolipin as substrate to generate phosphatidate (PA or 1,2-diacyl-sn-glycero-3-phosphate), a second messenger signaling lipid. Production of PA facilitates Mitofusin-mediated fusion, whereas the cleavage of PA by the Lipin family of phosphatases produces diacylgycerol (DAG) which promotes mitochondrial fission. Both Lipin and DAG regulate mitochondrial dynamics and membrane fusion/fission, important processes for adapting mitochondrial metabolism to changes in cell physiology. Mitochondrial fusion enables cells to cope with the increased nucleotide demand during DNA synthesis. Mitochondrial function and dynamics are closely associated with biological processes such as cell growth, proliferation, and differentiation. Mediator of MYC activity, promotes mitochondrial fusion and activates AMPK which in turn inhibits YAP/TAZ, thereby inducing cell growth and proliferation. The endonuclease activity plays a critical role in PIWI-interacting RNA (piRNA) biogenesis during spermatogenesis. Implicated in spermatogenesis and sperm fertility in testicular germ cells, its single strand-specific nuclease activity is critical for the biogenesis/maturation of PIWI-interacting RNA (piRNA). MOV10L1 selectively binds to piRNA precursors and funnels them to the endonuclease that catalyzes the first cleavage step of piRNA processing to generate piRNA intermediate fragments that are subsequently loaded to Piwi proteins. Cleaves either DNA or RNA substrates with similar affinity, producing a 5' phosphate end, in this way it participates in the processing of primary piRNA transcripts. piRNAs provide essential protection against the activity of mobile genetic elements. piRNA-mediated transposon silencing is thus critical for maintaining genome stability, in particular in germline cells when transposons are mobilized as a consequence of wide-spread genomic demethylation. PA may act as signaling molecule in the recognition/transport of the precursor RNAs of primary piRNAs. Interacts with tesmin in testes, suggesting a role in spermatogenesis via association with its interacting partner. This is Mitochondrial cardiolipin hydrolase (Pld6) from Mus musculus (Mouse).